A 942-amino-acid polypeptide reads, in one-letter code: Homeobox protein 2 (942 aa).

Composition is skewed to low complexity over residues 32-87 (ECNE…NINE) and 98-130 (SPYSSPSSSISSPSRSPSPNSPASSSPIHSPIP). Disordered regions lie at residues 32–149 (ECNE…PQNI), 161–494 (LESP…RLKK), 537–580 (RQEK…QGGA), and 609–942 (FKNN…CQQN). A compositionally biased stretch (polar residues) spans 131 to 149 (NTNFKQSGEYQSIPSPQNI). Residues 163–261 (SPNSSNSSPS…PSSNLSKSNS (99 aa)) show a composition bias toward low complexity. Positions 269-290 (QAPSNTSSPQLLSPNHNQQRIS) are enriched in polar residues. 2 stretches are compositionally biased toward low complexity: residues 299–430 (NNNH…NSSP) and 450–464 (NNNNNNNNNNNSNSS). The span at 465 to 481 (FDEYQPQQKVSRSNSPN) shows a compositional bias: polar residues. Residues 485-544 (EKKRRTRLKKEQADILKTFFDNDDYPTKDDKETLANRLGMSYCAVTTWFSNKRQEKKRRG) constitute a DNA-binding region (homeobox). 6 stretches are compositionally biased toward low complexity: residues 609–621 (FKNNNMDNNNKNV), 628–685 (NNNN…GSSD), 694–737 (NNNN…NNNN), 752–764 (NNNNNNNNNNNNN), 776–864 (SDDT…YLNN), and 890–927 (NNFNGDNNNNNNNKNNNNNNQNNNGNGNNNNNNNNDNN). The stretch at 835–865 (NNNNNNNNQNNNNNNNNNQYNNNNKNYLNNI) forms a coiled coil.

The protein localises to the nucleus. In terms of biological role, putative transcription factor that may potentiate the function of warA. The chain is Homeobox protein 2 (hbx2) from Dictyostelium discoideum (Social amoeba).